Reading from the N-terminus, the 335-residue chain is Homeobox protein Hox-A1 (335 aa).

The disordered stretch occupies residues 61–80; the sequence is IGSPHHHHHHHHRHPQPATY. The span at 64-75 shows a compositional bias: basic residues; sequence PHHHHHHHHRHP. The interaction with OGT stretch occupies residues 75–203; it reads PQPATYQTSG…PASETSSPAQ (129 aa). The short motif at 204 to 209 is the Antp-type hexapeptide element; the sequence is TFDWMK. The segment at residues 229-288 is a DNA-binding region (homeobox); sequence PNAVRTNFTTKQLTELEKEFHFNKYLTRARRVEIAASLQLNETQVKIWFQNRRMKQKKRE. The tract at residues 281 to 335 is disordered; it reads RMKQKKREKEGLLPISPATPPGNDEKAEESSEKSSSSPCVPSPGSSTSDTLTTSH. Basic and acidic residues predominate over residues 303–312; the sequence is NDEKAEESSE. The span at 313–328 shows a compositional bias: low complexity; that stretch reads KSSSSPCVPSPGSSTS.

Belongs to the Antp homeobox family. Labial subfamily. Interacts with OGT (via TPR repeats domain); the interaction takes place mainly in the nucleus. Forms a DNA-binding heterodimer with transcription factor PBX1.

The protein localises to the nucleus. Sequence-specific transcription factor. Regulates multiple developmental processes including brainstem, inner and outer ear, abducens nerve and cardiovascular development and morphogenesis as well as cognition and behavior. Also part of a developmental regulatory system that provides cells with specific positional identities on the anterior-posterior axis. Acts on the anterior body structures. Seems to act in the maintenance and/or generation of hindbrain segments. Activates transcription in the presence of PBX1A and PKNOX1. This is Homeobox protein Hox-A1 (HOXA1) from Homo sapiens (Human).